Reading from the N-terminus, the 428-residue chain is 3-phosphoshikimate 1-carboxyvinyltransferase (428 aa).

3-phosphoshikimate contacts are provided by lysine 22, serine 23, and arginine 27. Lysine 22 provides a ligand contact to phosphoenolpyruvate. Glycine 96 and arginine 124 together coordinate phosphoenolpyruvate. Serine 170, serine 171, glutamine 172, serine 198, aspartate 314, asparagine 337, and lysine 341 together coordinate 3-phosphoshikimate. Glutamine 172 lines the phosphoenolpyruvate pocket. The active-site Proton acceptor is the aspartate 314. Arginine 345, arginine 387, and lysine 412 together coordinate phosphoenolpyruvate.

The protein belongs to the EPSP synthase family. Monomer.

The protein localises to the cytoplasm. The enzyme catalyses 3-phosphoshikimate + phosphoenolpyruvate = 5-O-(1-carboxyvinyl)-3-phosphoshikimate + phosphate. It participates in metabolic intermediate biosynthesis; chorismate biosynthesis; chorismate from D-erythrose 4-phosphate and phosphoenolpyruvate: step 6/7. Catalyzes the transfer of the enolpyruvyl moiety of phosphoenolpyruvate (PEP) to the 5-hydroxyl of shikimate-3-phosphate (S3P) to produce enolpyruvyl shikimate-3-phosphate and inorganic phosphate. The sequence is that of 3-phosphoshikimate 1-carboxyvinyltransferase from Photobacterium profundum (strain SS9).